Here is a 366-residue protein sequence, read N- to C-terminus: D-alanine--D-alanine ligase (366 aa).

Residues 150-353 form the ATP-grasp domain; that stretch reads KRVLRDAGVP…YPALVDRLIV (204 aa). 180–235 contacts ATP; it reads IGQLGLPLFIKPASQGSSVGVSKVTDRAGFAAALALAFRYDAKVLVEQGISGREIE. Residues D307, E320, and N322 each coordinate Mg(2+).

This sequence belongs to the D-alanine--D-alanine ligase family. Requires Mg(2+) as cofactor. Mn(2+) is required as a cofactor.

Its subcellular location is the cytoplasm. It catalyses the reaction 2 D-alanine + ATP = D-alanyl-D-alanine + ADP + phosphate + H(+). It functions in the pathway cell wall biogenesis; peptidoglycan biosynthesis. Its function is as follows. Cell wall formation. The chain is D-alanine--D-alanine ligase from Sodalis glossinidius (strain morsitans).